Here is a 1403-residue protein sequence, read N- to C-terminus: Mannuronan C5-epimerase AlgE1 (1403 aa).

PbH1 repeat units lie at residues 133–155 (DRDV…DPHE), 157–179 (TINL…VADY), 180–202 (QVGG…NIVT), 204–226 (TNDF…VVQR), 257–279 (AHDV…RVYG), 280–302 (AQDV…YAEV), and 320–359 (TTGT…SIDG). 2 disordered regions span residues 372-395 (STVS…NDAL) and 408-428 (AGDD…GAGR). Hemolysin-type calcium-binding repeat units follow at residues 388–403 (GSAG…AHET), 406–422 (GQAG…NDIL), 424–440 (GGAG…ADTF), 557–573 (GYGG…DDIL), 574–591 (VGGA…ADVF), 697–712 (EGTD…EANE), 716–732 (GLDG…DDIL), and 734–750 (GGAG…ADTF). PbH1 repeat units lie at residues 977–999 (DRNV…DPHE), 1001–1023 (TINL…VADY), 1024–1046 (LVDS…NIVT), 1048–1070 (TYDF…TIQR), 1101–1123 (TNNV…RLYG), 1124–1146 (TEDV…YPEV), 1163–1185 (TLNT…AVRE), and 1190–1212 (SDYT…QLSG). 3 Hemolysin-type calcium-binding repeats span residues 1227-1243 (GTDG…NDQL), 1244-1261 (YGGA…DDLL), and 1263-1279 (GGAG…ADTF).

Belongs to the D-mannuronate C5-epimerase family. Ca(2+) is required as a cofactor.

It is found in the secreted. The enzyme catalyses [(1-&gt;4)-beta-D-mannuronosyl](n) = [alginate](n). It participates in glycan biosynthesis; alginate biosynthesis. Inhibited by zinc. Functionally, converts beta-D-mannuronic acid (M) to alpha-L-guluronic acid (G), producing a polymer with gel-forming capacity, required for the formation of the cyst coat. The chain is Mannuronan C5-epimerase AlgE1 from Azotobacter vinelandii.